We begin with the raw amino-acid sequence, 52 residues long: Alpha-crystallin B chain (52 aa).

It belongs to the small heat shock protein (HSP20) family. Homodimer. Aggregates with homologous proteins, including alpha-A-crystallin and the small heat shock protein HSPB1, to form large heteromeric complexes.

Functionally, may contribute to the transparency and refractive index of the lens. The sequence is that of Alpha-crystallin B chain (CRYAB) from Eudromia elegans (Elegant crested-tinamou).